We begin with the raw amino-acid sequence, 193 residues long: Large ribosomal subunit protein bL25 (193 aa).

Belongs to the bacterial ribosomal protein bL25 family. CTC subfamily. Part of the 50S ribosomal subunit; part of the 5S rRNA/L5/L18/L25 subcomplex. Contacts the 5S rRNA. Binds to the 5S rRNA independently of L5 and L18.

This is one of the proteins that binds to the 5S RNA in the ribosome where it forms part of the central protuberance. This chain is Large ribosomal subunit protein bL25, found in Oleidesulfovibrio alaskensis (strain ATCC BAA-1058 / DSM 17464 / G20) (Desulfovibrio alaskensis).